A 95-amino-acid polypeptide reads, in one-letter code: Aspartyl/glutamyl-tRNA(Asn/Gln) amidotransferase subunit C (95 aa).

Residues 51–95 (PTSHATLTSSRLREDVTRPSLPPEKSLANAPAKSDTSFAVPKIIE) are disordered.

This sequence belongs to the GatC family. In terms of assembly, heterotrimer of A, B and C subunits.

The catalysed reaction is L-glutamyl-tRNA(Gln) + L-glutamine + ATP + H2O = L-glutaminyl-tRNA(Gln) + L-glutamate + ADP + phosphate + H(+). It catalyses the reaction L-aspartyl-tRNA(Asn) + L-glutamine + ATP + H2O = L-asparaginyl-tRNA(Asn) + L-glutamate + ADP + phosphate + 2 H(+). Its function is as follows. Allows the formation of correctly charged Asn-tRNA(Asn) or Gln-tRNA(Gln) through the transamidation of misacylated Asp-tRNA(Asn) or Glu-tRNA(Gln) in organisms which lack either or both of asparaginyl-tRNA or glutaminyl-tRNA synthetases. The reaction takes place in the presence of glutamine and ATP through an activated phospho-Asp-tRNA(Asn) or phospho-Glu-tRNA(Gln). The sequence is that of Aspartyl/glutamyl-tRNA(Asn/Gln) amidotransferase subunit C from Myxococcus xanthus (strain DK1622).